A 296-amino-acid chain; its full sequence is Haloalkane dehalogenase (296 aa).

Positions P31–R155 constitute an AB hydrolase-1 domain. N38 serves as a coordination point for chloride. D108 (nucleophile) is an active-site residue. A chloride-binding site is contributed by W109. E132 (proton donor) is an active-site residue. Catalysis depends on H272, which acts as the Proton acceptor.

It belongs to the haloalkane dehalogenase family. Type 2 subfamily. As to quaternary structure, monomer.

It is found in the periplasm. It carries out the reaction 1-haloalkane + H2O = a halide anion + a primary alcohol + H(+). The enzyme catalyses (3R,6R)-1,3,4,6-tetrachlorocyclohexa-1,4-diene + 2 H2O = 2,5-dichlorocyclohexa-2,5-dien-1,4-diol + 2 chloride + 2 H(+). The protein operates within xenobiotic degradation; gamma-hexachlorocyclohexane degradation. Competitively inhibited by the key pollutants 1,2-dichloroethane (1,2-DCE) and 1,2-dichloropropane (1,2-DCP). In terms of biological role, catalyzes hydrolytic cleavage of carbon-halogen bonds in halogenated aliphatic compounds, leading to the formation of the corresponding primary alcohols, halide ions and protons. Has a broad substrate specificity since not only monochloroalkanes (C3 to C10) but also dichloroalkanes (&gt; C3), bromoalkanes, and chlorinated aliphatic alcohols are good substrates. Shows almost no activity with 1,2-dichloroethane, but very high activity with the brominated analog. Is involved in the degradation of the important environmental pollutant gamma-hexachlorocyclohexane (gamma-HCH or lindane) as it also catalyzes conversion of 1,3,4,6-tetrachloro-1,4-cyclohexadiene (1,4-TCDN) to 2,5-dichloro-2,5-cyclohexadiene-1,4-diol (2,5-DDOL) via the intermediate 2,4,5-trichloro-2,5-cyclohexadiene-1-ol (2,4,5-DNOL). This degradation pathway allows S.japonicum UT26 to grow on gamma-HCH as the sole source of carbon and energy. The protein is Haloalkane dehalogenase of Sphingobium indicum (strain DSM 16413 / CCM 7287 / MTCC 6362 / UT26 / NBRC 101211 / UT26S) (Sphingobium japonicum).